The following is a 413-amino-acid chain: Paxillin homolog 1 (413 aa).

A compositionally biased stretch (basic and acidic residues) spans 33 to 45 (HISDRRSQSRDDF). Positions 33–157 (HISDRRSQSR…PLHSDSMIGT (125 aa)) are disordered. The span at 49 to 69 (YDLQGNLNTQSVSNGNITTSP) shows a compositional bias: polar residues. The segment covering 73–92 (RSSEGKDYSKSQERIYENES) has biased composition (basic and acidic residues). Positions 118 to 143 (ASSSRKSLGPPSQAQSYSDVRSNGRS) are enriched in polar residues. LIM zinc-binding domains are found at residues 174 to 232 (GDCA…NQFS), 233 to 292 (PKCQ…LFAP), 293 to 350 (KCNG…ESRG), and 351 to 410 (SICS…TYAL).

This sequence belongs to the paxillin family. As to expression, isoform a: Expressed in all 95 body wall muscle cells as well as in the pharyngeal muscle cells (at protein level). Isoform c: Expressed in the body wall muscle cells and in the pharyngeal muscle cells.

The protein resides in the cell junction. It is found in the adherens junction. Its subcellular location is the cell membrane. The protein localises to the cytoplasm. It localises to the myofibril. The protein resides in the sarcomere. It is found in the m line. Its subcellular location is the cell projection. The protein localises to the podosome. Its function is as follows. Required for myofilament organization of the pharyngeal sarcomeres and for pharyngeal muscle contractions and hence for pharyngeal pumping. Together with lin-8, might be required for myofilament organization in the body wall muscles. This is Paxillin homolog 1 (pxl-1) from Caenorhabditis elegans.